Consider the following 596-residue polypeptide: Thioredoxin reductase 1, mitochondrial (596 aa).

Residues 59–87 form a disordered region; the sequence is LTGQRGSRDSTGATGGNAPAGSGAGAPPP. The span at 68–79 shows a compositional bias: low complexity; sequence STGATGGNAPAG. FAD is bound by residues 120-126, 143-147, 159-170, 233-235, 262-266, S282, F286, and Y302; these read IGGGSAG, LDFVK, GGTCVNVGCIPK, GLG, and AVGGR. C162 and C167 are oxidised to a cystine. Residues 322-328 and P355 contribute to the NADP(+) site; that span reads VRSIVLR. Residues 392–399, 429–432, 438–443, and F472 each bind FAD; these read RKGLVDDL, VGDI, and ELTPVA. The Proton acceptor role is filled by H569. P570 serves as a coordination point for FAD. A disulfide bridge links C594 with C595.

This sequence belongs to the class-I pyridine nucleotide-disulfide oxidoreductase family. As to quaternary structure, homodimer. FAD is required as a cofactor. As to expression, during embryogenesis, expression is seen in germ cell progenitors, developing midgut, hindgut and proventriculus.

The protein localises to the mitochondrion. Its subcellular location is the cytoplasm. It carries out the reaction [thioredoxin]-dithiol + NADP(+) = [thioredoxin]-disulfide + NADPH + H(+). In terms of biological role, thioredoxin system is a major player in glutathione metabolism, due to the demonstrated absence of a glutathione reductase. Functionally interacts with the Sod/Cat reactive oxidation species (ROS) defense system and thereby has a role in preadult development and life span. Lack of a glutathione reductase suggests antioxidant defense in Drosophila, and probably in related insects, differs fundamentally from that in other organisms. The chain is Thioredoxin reductase 1, mitochondrial from Drosophila melanogaster (Fruit fly).